The primary structure comprises 264 residues: DNA repair protein RecO (264 aa).

The protein belongs to the RecO family.

Its function is as follows. Involved in DNA repair and RecF pathway recombination. The chain is DNA repair protein RecO from Chlorobium luteolum (strain DSM 273 / BCRC 81028 / 2530) (Pelodictyon luteolum).